The primary structure comprises 228 residues: Apoptosis regulator R1 (228 aa).

The segment covering 1–21 (LNPKKKENNGVKNGDREKQHE) has biased composition (basic and acidic residues). The interval 1 to 29 (LNPKKKENNGVKNGDREKQHETGNTIFRG) is disordered. Residues 120–139 (SLFQGGVNWGRIVAFFVFGA) carry the BH1 motif. The short motif at 171–186 (DWIQSNGGWNGFLTLY) is the BH2 element. A helical membrane pass occupies residues 207–227 (TVLTGAVALGALMTVGALFAS).

The protein belongs to the Bcl-2 family.

It localises to the membrane. Could be the homolog of mammalian Bcl-W. This chain is Apoptosis regulator R1, found in Xenopus laevis (African clawed frog).